A 246-amino-acid polypeptide reads, in one-letter code: Eukaryotic translation initiation factor 3 subunit K (246 aa).

The span at 1 to 21 (MENDQDQQQQQQQSQQQQPQQ) shows a compositional bias: low complexity. The interval 1 to 30 (MENDQDQQQQQQQSQQQQPQQEEQEQVDVD) is disordered. Residues 72–235 (YLFQANSTLL…QKKADTFTFD (164 aa)) enclose the PCI domain.

Belongs to the eIF-3 subunit K family. Component of the eukaryotic translation initiation factor 3 (eIF-3) complex.

The protein localises to the cytoplasm. Functionally, component of the eukaryotic translation initiation factor 3 (eIF-3) complex, which is involved in protein synthesis of a specialized repertoire of mRNAs and, together with other initiation factors, stimulates binding of mRNA and methionyl-tRNAi to the 40S ribosome. The eIF-3 complex specifically targets and initiates translation of a subset of mRNAs involved in cell proliferation. This Dictyostelium discoideum (Social amoeba) protein is Eukaryotic translation initiation factor 3 subunit K (eif3K).